The primary structure comprises 239 residues: Lipoprotein-releasing system ATP-binding protein LolD (239 aa).

Positions 9–239 (LQVQHVSKHY…AATSPTGLAE (231 aa)) constitute an ABC transporter domain. 45 to 52 (GSSGSGKS) serves as a coordination point for ATP.

This sequence belongs to the ABC transporter superfamily. Lipoprotein translocase (TC 3.A.1.125) family. As to quaternary structure, the complex is composed of two ATP-binding proteins (LolD) and two transmembrane proteins (LolC and LolE).

The protein resides in the cell inner membrane. Part of the ABC transporter complex LolCDE involved in the translocation of mature outer membrane-directed lipoproteins, from the inner membrane to the periplasmic chaperone, LolA. Responsible for the formation of the LolA-lipoprotein complex in an ATP-dependent manner. The polypeptide is Lipoprotein-releasing system ATP-binding protein LolD (Shewanella frigidimarina (strain NCIMB 400)).